We begin with the raw amino-acid sequence, 353 residues long: Holliday junction branch migration complex subunit RuvB (353 aa).

The tract at residues 4-185 (ADRLITAAGG…FGIVQRLEFY (182 aa)) is large ATPase domain (RuvB-L). ATP contacts are provided by residues isoleucine 24, arginine 25, glycine 66, lysine 69, threonine 70, threonine 71, 132 to 134 (EDF), arginine 175, tyrosine 185, and arginine 222. A Mg(2+)-binding site is contributed by threonine 70. The small ATPAse domain (RuvB-S) stretch occupies residues 186 to 256 (NIADLSTIVS…TADKALNLLD (71 aa)). The tract at residues 259-353 (EHGFDHQDRR…DDVVDDPADL (95 aa)) is head domain (RuvB-H). DNA contacts are provided by arginine 295, arginine 314, and arginine 319.

Belongs to the RuvB family. Homohexamer. Forms an RuvA(8)-RuvB(12)-Holliday junction (HJ) complex. HJ DNA is sandwiched between 2 RuvA tetramers; dsDNA enters through RuvA and exits via RuvB. An RuvB hexamer assembles on each DNA strand where it exits the tetramer. Each RuvB hexamer is contacted by two RuvA subunits (via domain III) on 2 adjacent RuvB subunits; this complex drives branch migration. In the full resolvosome a probable DNA-RuvA(4)-RuvB(12)-RuvC(2) complex forms which resolves the HJ.

The protein localises to the cytoplasm. It carries out the reaction ATP + H2O = ADP + phosphate + H(+). Functionally, the RuvA-RuvB-RuvC complex processes Holliday junction (HJ) DNA during genetic recombination and DNA repair, while the RuvA-RuvB complex plays an important role in the rescue of blocked DNA replication forks via replication fork reversal (RFR). RuvA specifically binds to HJ cruciform DNA, conferring on it an open structure. The RuvB hexamer acts as an ATP-dependent pump, pulling dsDNA into and through the RuvAB complex. RuvB forms 2 homohexamers on either side of HJ DNA bound by 1 or 2 RuvA tetramers; 4 subunits per hexamer contact DNA at a time. Coordinated motions by a converter formed by DNA-disengaged RuvB subunits stimulates ATP hydrolysis and nucleotide exchange. Immobilization of the converter enables RuvB to convert the ATP-contained energy into a lever motion, pulling 2 nucleotides of DNA out of the RuvA tetramer per ATP hydrolyzed, thus driving DNA branch migration. The RuvB motors rotate together with the DNA substrate, which together with the progressing nucleotide cycle form the mechanistic basis for DNA recombination by continuous HJ branch migration. Branch migration allows RuvC to scan DNA until it finds its consensus sequence, where it cleaves and resolves cruciform DNA. The polypeptide is Holliday junction branch migration complex subunit RuvB (Pseudomonas savastanoi pv. phaseolicola (strain 1448A / Race 6) (Pseudomonas syringae pv. phaseolicola (strain 1448A / Race 6))).